A 221-amino-acid chain; its full sequence is GTP cyclohydrolase III (221 aa).

The protein belongs to the archaeal-type GTP cyclohydrolase family.

It catalyses the reaction GTP + 3 H2O = 2-amino-5-formylamino-6-(5-phospho-D-ribosylamino)pyrimidin-4(3H)-one + 2 phosphate + 2 H(+). Catalyzes the formation of 2-amino-5-formylamino-6-ribofuranosylamino-4(3H)-pyrimidinone ribonucleotide monophosphate and inorganic phosphate from GTP. Also has an independent pyrophosphate phosphohydrolase activity. This chain is GTP cyclohydrolase III, found in Pyrobaculum arsenaticum (strain DSM 13514 / JCM 11321 / PZ6).